The following is a 438-amino-acid chain: Battenin (438 aa).

A disordered region spans residues 1-25 (MGGCAGSRRRLSDSEGEETVPEPRL). The Cytoplasmic segment spans residues 1 to 37 (MGGCAGSRRRLSDSEGEETVPEPRLPLLDHQGAHWKN). Phosphoserine is present on residues serine 12 and serine 14. Residues 38–58 (AVGFWLLGLCNNFSYVVMLSA) form a helical membrane-spanning segment. The Lumenal portion of the chain corresponds to 59 to 127 (AHDILSHERT…GLHLLPYSPR (69 aa)). 2 N-linked (GlcNAc...) asparagine glycosylation sites follow: asparagine 71 and asparagine 85. The chain crosses the membrane as a helical span at residues 128-148 (VLVSGICAAGSFVLVAFSHSV). The Cytoplasmic segment spans residues 149–151 (GTS). A helical membrane pass occupies residues 152–172 (LCGVVLASISSGLGEVTFLSL). The Lumenal portion of the chain corresponds to 173-182 (TAFYPRAVIS). Residues 183 to 203 (WWSSGTGGAGLLGALSYLGLT) traverse the membrane as a helical segment. The Cytoplasmic portion of the chain corresponds to 204–277 (QAGLSPQQTL…SLSLRERWTV (74 aa)). Positions 237 to 268 (QDPGGEEEAESSARQPLIRTEAPESKPGSSSS) are disordered. The Lysosomal targeting motif motif lies at 242 to 244 (EEE). The Lysosomal targeting motif. Required for AP1G1, AP2A2 and AP3D1 interaction signature appears at 253 to 254 (LI). Residues 278–298 (FKGLLWYIVPLVVVYFAEYFI) form a helical membrane-spanning segment. Over 299 to 346 (NQGLFELLFFRNTSLSHAQQYRWYQMLYQAGVFASRSSLRCCHIRFTW) the chain is Lumenal. N-linked (GlcNAc...) asparagine glycosylation is present at asparagine 310. Residues 347-367 (ALALLQCLNLAFLLADVWFGF) traverse the membrane as a helical segment. Over 368-438 (LLSIYFVFLI…PLHDFLCQLS (71 aa)) the chain is Cytoplasmic. The short motif at 409–419 (MATTCISDTLG) is the Lysosomal targeting motif element. Cysteine 435 is subject to Cysteine methyl ester. Cysteine 435 carries S-farnesyl cysteine lipidation. Residues 436-438 (QLS) constitute a propeptide, removed in mature form.

Belongs to the battenin family. Interacts with DCTN1, KIF3A, RAB7A and RILP. Interacts with CLN5. In terms of processing, highly glycosylated. Post-translationally, farnesylation is important for trafficking to lysosomes.

It is found in the lysosome membrane. Its subcellular location is the late endosome. The protein resides in the lysosome. Its function is as follows. Mediates microtubule-dependent, anterograde transport connecting the Golgi network, endosomes, autophagosomes, lysosomes and plasma membrane, and participates in several cellular processes such as regulation of lysosomal pH, lysosome protein degradation, receptor-mediated endocytosis, autophagy, transport of proteins and lipids from the TGN, apoptosis and synaptic transmission. Facilitates the proteins transport from trans-Golgi network (TGN)-to other membrane compartments such as transport of microdomain-associated proteins to the plasma membrane, IGF2R transport to the lysosome where it regulates the CTSD release leading to regulation of CTSD maturation and thereby APP intracellular processing. Moreover regulates CTSD activity in response to osmotic stress. Also binds galactosylceramide and transports it from the trans Golgi to the rafts, which may have immediate and downstream effects on cell survival by modulating ceramide synthesis. At the plasma membrane, regulates actin-dependent events including filopodia formation, cell migration, and pinocytosis through ARF1-CDC42 pathway and also the cytoskeleton organization through interaction with MYH10 and fodrin leading to the regulation of the plasma membrane association of Na+, K+ ATPase complex. Regulates synaptic transmission in the amygdala, hippocampus, and cerebellum through regulation of synaptic vesicles density and their proximity to active zones leading to modulation of short-term plasticity and age-dependent anxious behavior, learning and memory. Regulates autophagic vacuoles (AVs) maturation by modulating the trafficking between endocytic and autophagolysosomal/lysosomal compartments, which involves vesicle fusion leading to regulation of degradation process. Also participates in cellular homeostasis of compounds such as, water, ions, amino acids, proteins and lipids in several tissue namely in brain and kidney through regulation of their transport and synthesis. This chain is Battenin, found in Macaca fascicularis (Crab-eating macaque).